Consider the following 511-residue polypeptide: Lysine--tRNA ligase (511 aa).

Mg(2+)-binding residues include E422 and E429.

Belongs to the class-II aminoacyl-tRNA synthetase family. Homodimer. The cofactor is Mg(2+).

It localises to the cytoplasm. It catalyses the reaction tRNA(Lys) + L-lysine + ATP = L-lysyl-tRNA(Lys) + AMP + diphosphate. The chain is Lysine--tRNA ligase from Chlorobaculum tepidum (strain ATCC 49652 / DSM 12025 / NBRC 103806 / TLS) (Chlorobium tepidum).